Here is a 167-residue protein sequence, read N- to C-terminus: Leptin (167 aa).

Residues 1–21 form the signal peptide; that stretch reads MYWRTLWGFLWLWPYLFYIQA. C117 and C167 are joined by a disulfide.

Belongs to the leptin family.

It localises to the secreted. Its function is as follows. Key player in the regulation of energy balance and body weight control. Once released into the circulation, has central and peripheral effects by binding LEPR, found in many tissues, which results in the activation of several major signaling pathways. In the hypothalamus, acts as an appetite-regulating factor that induces a decrease in food intake and an increase in energy consumption by inducing anorexinogenic factors and suppressing orexigenic neuropeptides, also regulates bone mass and secretion of hypothalamo-pituitary-adrenal hormones. In the periphery, increases basal metabolism, influences reproductive function, regulates pancreatic beta-cell function and insulin secretion, is pro-angiogenic for endothelial cell and affects innate and adaptive immunity. In the arcuate nucleus of the hypothalamus, activates by depolarization POMC neurons inducing FOS and SOCS3 expression to release anorexigenic peptides and inhibits by hyperpolarization NPY neurons inducing SOCS3 with a consequent reduction on release of orexigenic peptides. In addition to its known satiety inducing effect, has a modulatory role in nutrient absorption. In the intestine, reduces glucose absorption by enterocytes by activating PKC and leading to a sequential activation of p38, PI3K and ERK signaling pathways which exerts an inhibitory effect on glucose absorption. Acts as a growth factor on certain tissues, through the activation of different signaling pathways increases expression of genes involved in cell cycle regulation such as CCND1, via JAK2-STAT3 pathway, or VEGFA, via MAPK1/3 and PI3K-AKT1 pathways. May also play an apoptotic role via JAK2-STAT3 pathway and up-regulation of BIRC5 expression. Pro-angiogenic, has mitogenic activity on vascular endothelial cells and plays a role in matrix remodeling by regulating the expression of matrix metalloproteinases (MMPs) and tissue inhibitors of metalloproteinases (TIMPs). In innate immunity, modulates the activity and function of neutrophils by increasing chemotaxis and the secretion of oxygen radicals. Increases phagocytosis by macrophages and enhances secretion of pro-inflammatory mediators. Increases cytotoxic ability of NK cells. Plays a pro-inflammatory role, in synergy with IL1B, by inducing NOS2 which promotes the production of IL6, IL8 and Prostaglandin E2, through a signaling pathway that involves JAK2, PI3K, MAP2K1/MEK1 and MAPK14/p38. In adaptive immunity, promotes the switch of memory T-cells towards T helper-1 cell immune responses. Increases CD4(+)CD25(-) T-cell proliferation and reduces autophagy during TCR (T-cell receptor) stimulation, through MTOR signaling pathway activation and BCL2 up-regulation. This chain is Leptin (LEP), found in Macaca mulatta (Rhesus macaque).